The sequence spans 606 residues: RUN and FYVE domain-containing protein 2 (606 aa).

The RUN domain maps to 37–169 (DSDYPPLQQF…IDANLCVKGE (133 aa)). Residues 210-534 (EELNRQLNST…IKEANKALQG (325 aa)) adopt a coiled-coil conformation. An FYVE-type zinc finger spans residues 540-598 (DKEATHCKLCEKEFSLSKRKHHCRNCGEIFCNACSDNELPLPSSPKPVRVCDSCHALLI). 8 residues coordinate Zn(2+): cysteine 546, cysteine 549, cysteine 562, cysteine 565, cysteine 570, cysteine 573, cysteine 590, and cysteine 593.

As to quaternary structure, interacts with BMX. In terms of tissue distribution, expressed in brain, lung and testis.

Its subcellular location is the nucleus. This chain is RUN and FYVE domain-containing protein 2 (RUFY2), found in Homo sapiens (Human).